Here is a 428-residue protein sequence, read N- to C-terminus: Immunoglobulin superfamily containing leucine-rich repeat protein (428 aa).

A signal peptide spans 1–18 (MQELRLLCLVVLVGLAQA). Positions 19–50 (CPEPCECGEKYGFHIADCAYRDLQAVPSGFPA) constitute an LRRNT domain. N-linked (GlcNAc...) asparagine glycosylation occurs at asparagine 51. LRR repeat units lie at residues 51-72 (NVTT…AFRE), 75-96 (RLQS…ALAS), 99-122 (QLKS…HSLS), 123-144 (ALQL…AFRS), and 147-168 (ALRS…TFAP). The LRRCT domain occupies 180–231 (NPFDCTCGIVWFKTWALTTAVSIPEQDNITCTSPHVLKGTRLNRLLPLPCSA). The Ig-like domain occupies 232-343 (PSVQLTYQPS…GSAESSVNVA (112 aa)). A disulfide bridge links cysteine 257 with cysteine 327. Asparagine 309 is a glycosylation site (N-linked (GlcNAc...) asparagine).

It localises to the secreted. This is Immunoglobulin superfamily containing leucine-rich repeat protein (ISLR) from Bos taurus (Bovine).